The following is a 1024-amino-acid chain: Importin-8 (1024 aa).

Residues 22–102 (AENELNQSYK…RENMVEAIIR (81 aa)) form the Importin N-terminal domain. Residues 896 to 969 (FGRAQGSEEE…YSTPLDCDNG (74 aa)) form a disordered region. Acidic residues-rich tracts occupy residues 902-917 (SEEE…EDEV) and 934-952 (DNED…DEGL).

This sequence belongs to the importin beta family.

Its subcellular location is the cytoplasm. It localises to the nucleus. In terms of biological role, involved in nuclear protein import, either by acting as autonomous nuclear transport receptor or as an adapter-like protein in association with the importin-beta subunit KPNB1. Acting autonomously, may serve as receptor for nuclear localization signals (NLS) and promote translocation of import substrates through the nuclear pore complex (NPC) by an energy requiring, Ran-dependent mechanism. At the nucleoplasmic side of the NPC, Ran binds to importin, the importin/substrate complex dissociates and importin is re-exported from the nucleus to the cytoplasm where GTP hydrolysis releases Ran. The directionality of nuclear import is thought to be conferred by an asymmetric distribution of the GTP- and GDP-bound forms of Ran between the cytoplasm and nucleus. In vitro mediates the nuclear import of the signal recognition particle protein SRP19. May also be involved in cytoplasm-to-nucleus shuttling of a broad spectrum of other cargos, including Argonaute-microRNAs complexes, the JUN protein, RELA/NF-kappa-B p65 subunit, the translation initiation factor EIF4E and a set of receptor-activated mothers against decapentaplegic homolog (SMAD) transcription factors that play a critical role downstream of the large family of transforming growth factor beta and bone morphogenetic protein (BMP) cytokines. The polypeptide is Importin-8 (ipo8) (Danio rerio (Zebrafish)).